Consider the following 2477-residue polypeptide: Spectrin alpha chain, non-erythrocytic 1 (2477 aa).

The N-terminal domain stretch occupies residues 1–14 (MDPSGVKVLETAED). Spectrin repeat units follow at residues 45-146 (RFQF…VKLL), 150-251 (KLVQ…QGKL), 256-358 (EVQR…ARLN), 361-465 (YRLQ…QYEQ), 468-570 (DLQL…AQLA), 574-676 (HLQQ…KLRE), 679-781 (QQQQ…QKLA), 785-888 (RLQQ…DLED), 891-969 (QAQQ…ETGK), and 1096-1162 (LFRE…SEGL). The region spanning 967–1026 (TGKELVLALYDYQEKSPREVTMKKGDILTLLNSTNKDWWKVEVNDRQGFVPAAYVKKLDP) is the SH3 domain. Tyr1176 is modified (phosphotyrosine). Spectrin repeat units follow at residues 1234 to 1336 (EVQR…EKLG), 1339 to 1442 (HDLQ…MMLD), 1446 to 1549 (ELQL…KLGE), 1552 to 1661 (TLQQ…KLKE), 1664 to 1767 (KQQN…KLNE), 1769 to 1873 (HRLH…RLEE), 1876 to 1979 (EYQQ…KLDE), 1983 to 2086 (FLQF…KLLE), 2097 to 2199 (LFLT…LELQ), and 2211 to 2315 (LRQE…NLEQ). Residues 2257 to 2477 (HQEIRAMRSQ…IEFTRSLFVN (221 aa)) form a C-terminal domain region. EF-hand domains follow at residues 2328-2363 (EALK…LGYD), 2371-2406 (EPDP…RETE), and 2409-2444 (KSSE…EQAD). Ca(2+) is bound by residues Asp2341, Asp2343, Ser2345, Arg2347, Glu2352, Asp2384, Asn2386, Asp2388, His2390, and Glu2395.

It belongs to the spectrin family. In terms of assembly, like erythrocyte spectrin, the spectrin-like proteins are capable of forming dimers which can further associate to tetramers. Interacts with ACP1. Post-translationally, phosphorylation of Tyr-1176 decreases sensitivity to cleavage by calpain in vitro.

Its subcellular location is the cytoplasm. It is found in the cytoskeleton. The protein resides in the cell cortex. In terms of biological role, morphologically, spectrin-like proteins appear to be related to spectrin, showing a flexible rod-like structure. They can bind actin but seem to differ in their calmodulin-binding activity. In nonerythroid tissues, spectrins, in association with some other proteins, may play an important role in membrane organization. The sequence is that of Spectrin alpha chain, non-erythrocytic 1 (SPTAN1) from Gallus gallus (Chicken).